The chain runs to 169 residues: S-ribosylhomocysteine lyase (169 aa).

Residues H54, H58, and C128 each coordinate Fe cation.

This sequence belongs to the LuxS family. As to quaternary structure, homodimer. Requires Fe cation as cofactor.

It carries out the reaction S-(5-deoxy-D-ribos-5-yl)-L-homocysteine = (S)-4,5-dihydroxypentane-2,3-dione + L-homocysteine. Functionally, involved in the synthesis of autoinducer 2 (AI-2) which is secreted by bacteria and is used to communicate both the cell density and the metabolic potential of the environment. The regulation of gene expression in response to changes in cell density is called quorum sensing. Catalyzes the transformation of S-ribosylhomocysteine (RHC) to homocysteine (HC) and 4,5-dihydroxy-2,3-pentadione (DPD). In Shewanella oneidensis (strain ATCC 700550 / JCM 31522 / CIP 106686 / LMG 19005 / NCIMB 14063 / MR-1), this protein is S-ribosylhomocysteine lyase.